Here is a 98-residue protein sequence, read N- to C-terminus: Large ribosomal subunit protein uL23 (98 aa).

It belongs to the universal ribosomal protein uL23 family. In terms of assembly, part of the 50S ribosomal subunit. Contacts protein L29, and trigger factor when it is bound to the ribosome.

One of the early assembly proteins it binds 23S rRNA. One of the proteins that surrounds the polypeptide exit tunnel on the outside of the ribosome. Forms the main docking site for trigger factor binding to the ribosome. The chain is Large ribosomal subunit protein uL23 from Teredinibacter turnerae (strain ATCC 39867 / T7901).